The primary structure comprises 24 residues: Brevinin-1Bf (24 aa).

Cysteines 18 and 24 form a disulfide.

In terms of tissue distribution, expressed by the skin glands.

It is found in the secreted. Antibacterial activity against Gram-positive bacterium S.aureus and Gram-negative bacterium E.coli. The protein is Brevinin-1Bf of Lithobates berlandieri (Rio Grande leopard frog).